The primary structure comprises 396 residues: Ribosomal RNA large subunit methyltransferase I (396 aa).

A PUA domain is found at 2–81 (SVRLVLAKGR…ESIDIAFFSR (80 aa)).

Belongs to the methyltransferase superfamily. RlmI family.

The protein localises to the cytoplasm. The catalysed reaction is cytidine(1962) in 23S rRNA + S-adenosyl-L-methionine = 5-methylcytidine(1962) in 23S rRNA + S-adenosyl-L-homocysteine + H(+). Its function is as follows. Specifically methylates the cytosine at position 1962 (m5C1962) of 23S rRNA. The protein is Ribosomal RNA large subunit methyltransferase I of Escherichia coli O157:H7.